Consider the following 144-residue polypeptide: 3-dehydroquinate dehydratase (144 aa).

Catalysis depends on Y22, which acts as the Proton acceptor. Residues N73, H79, and D86 each contribute to the substrate site. The active-site Proton donor is H99. Substrate-binding positions include 100 to 101 (IS) and R110.

This sequence belongs to the type-II 3-dehydroquinase family. As to quaternary structure, homododecamer.

The enzyme catalyses 3-dehydroquinate = 3-dehydroshikimate + H2O. It participates in metabolic intermediate biosynthesis; chorismate biosynthesis; chorismate from D-erythrose 4-phosphate and phosphoenolpyruvate: step 3/7. Its function is as follows. Catalyzes a trans-dehydration via an enolate intermediate. In Clostridium acetobutylicum (strain ATCC 824 / DSM 792 / JCM 1419 / IAM 19013 / LMG 5710 / NBRC 13948 / NRRL B-527 / VKM B-1787 / 2291 / W), this protein is 3-dehydroquinate dehydratase.